Reading from the N-terminus, the 510-residue chain is MSAKKPMALVILDGYGHRETQADNAITNANTPVLDGLMANQPNTLISASGMDVGLPDGQMGNSEVGHTNIGAGRVVYQDLTRITKAISDGEFQQNETLVNAIDKAVKAGKAVHIMGLMSPGGVHSHEDHIYAAVEMAAARGAEKIYLHCFLDGRDTPPRSAENSLKNFQELFAKLGKGRIASLVGRYYAMDRDNNWERVQKAYDLMTEAKAEFTFATAVEGLEAAYAREENDEFVQATEIKAEGEESAAIVDGDAVIFMNYRADRARQITRTFVPSFDGFTRNVFPAIDFVMLTQYAADIPLLCAFAPASLENTYGEWLSKEGKTQLRISETEKYAHVTFFFNGGIEDEFEGEERQLVASPKVATYDLQPEMSAPELTEKLVAAIKSGKYDAIVCNFPNCDMVGHTGVYDAAVKAVESLDECIGKVVEAIKEVDGQLLITADHGNAEMMIDPETGGVHTAHTNLPVPLIYVGSKAVEFKEGGKLSDLAPTMLALTDTAIPAEMSGEVLFK.

D13 and S63 together coordinate Mn(2+). Catalysis depends on S63, which acts as the Phosphoserine intermediate. Residues H124, 154–155 (RD), R186, R192, 262–265 (RADR), and K334 each bind substrate. Positions 401, 405, 442, 443, and 461 each coordinate Mn(2+).

It belongs to the BPG-independent phosphoglycerate mutase family. As to quaternary structure, monomer. It depends on Mn(2+) as a cofactor.

It catalyses the reaction (2R)-2-phosphoglycerate = (2R)-3-phosphoglycerate. Its pathway is carbohydrate degradation; glycolysis; pyruvate from D-glyceraldehyde 3-phosphate: step 3/5. In terms of biological role, catalyzes the interconversion of 2-phosphoglycerate and 3-phosphoglycerate. The polypeptide is 2,3-bisphosphoglycerate-independent phosphoglycerate mutase (Aliivibrio fischeri (strain ATCC 700601 / ES114) (Vibrio fischeri)).